Here is a 306-residue protein sequence, read N- to C-terminus: Olfactory receptor 8G17 (306 aa).

Topologically, residues 1 to 28 are extracellular; it reads MEKGNQSTVNKFFLSGLTEQPELQLPLF. An N-linked (GlcNAc...) asparagine glycan is attached at Asn5. A helical membrane pass occupies residues 29 to 49; that stretch reads LLFLGIYLLTVLGNLGMIILI. Residues 50-56 lie on the Cytoplasmic side of the membrane; sequence LLSSYLH. A helical membrane pass occupies residues 57–77; that stretch reads TPMYFFLSSLSFIDFCQSTVI. Over 78 to 97 the chain is Extracellular; sequence TPKMLVKFVREKNEISYPEC. A helical membrane pass occupies residues 98–118; the sequence is ITQLCFFVIFAVSESYMLAAM. Over 119-143 the chain is Cytoplasmic; the sequence is AYDRYVAICSPLLYSSIMSQHKCLS. The chain crosses the membrane as a helical span at residues 144–164; the sequence is LVLGVYILGIVCASAHVGCIF. Residues 165–196 lie on the Extracellular side of the membrane; the sequence is RIDFCKSDLINHYFCDLISILNLSCSNIFVND. The helical transmembrane segment at 197 to 217 threads the bilayer; that stretch reads LVILIFSLINTIFPTLTILSS. Residues 218-236 lie on the Cytoplasmic side of the membrane; that stretch reads YAFIIISILRIKSTEGRSK. The helical transmembrane segment at 237–257 threads the bilayer; it reads AFSTCSSHISAVAIFYISAGF. Topologically, residues 258 to 271 are extracellular; it reads TYLNPSSSHSMDEG. A helical membrane pass occupies residues 272 to 292; the sequence is KVSSIFYTIIVPMLNPLIYSL. Residues 293-306 are Cytoplasmic-facing; the sequence is RNKDVKIALKKMIE.

It belongs to the G-protein coupled receptor 1 family.

The protein localises to the cell membrane. Odorant receptor. This is Olfactory receptor 8G17 from Mus musculus (Mouse).